The primary structure comprises 106 residues: Large ribosomal subunit protein bL21 (106 aa).

This sequence belongs to the bacterial ribosomal protein bL21 family. As to quaternary structure, part of the 50S ribosomal subunit. Contacts protein L20.

In terms of biological role, this protein binds to 23S rRNA in the presence of protein L20. This is Large ribosomal subunit protein bL21 from Syntrophobacter fumaroxidans (strain DSM 10017 / MPOB).